Reading from the N-terminus, the 289-residue chain is Acetyl-coenzyme A carboxylase carboxyl transferase subunit beta (289 aa).

A CoA carboxyltransferase N-terminal domain is found at 28-289 (VMTKCPKCKK…QGGEMAVWQS (262 aa)). Zn(2+)-binding residues include C32, C35, C51, and C54. A C4-type zinc finger spans residues 32–54 (CPKCKKIMYTKEVLKNLKVCVNC).

This sequence belongs to the AccD/PCCB family. In terms of assembly, acetyl-CoA carboxylase is a heterohexamer composed of biotin carboxyl carrier protein (AccB), biotin carboxylase (AccC) and two subunits each of ACCase subunit alpha (AccA) and ACCase subunit beta (AccD). The cofactor is Zn(2+).

It localises to the cytoplasm. The catalysed reaction is N(6)-carboxybiotinyl-L-lysyl-[protein] + acetyl-CoA = N(6)-biotinyl-L-lysyl-[protein] + malonyl-CoA. Its pathway is lipid metabolism; malonyl-CoA biosynthesis; malonyl-CoA from acetyl-CoA: step 1/1. Component of the acetyl coenzyme A carboxylase (ACC) complex. Biotin carboxylase (BC) catalyzes the carboxylation of biotin on its carrier protein (BCCP) and then the CO(2) group is transferred by the transcarboxylase to acetyl-CoA to form malonyl-CoA. The protein is Acetyl-coenzyme A carboxylase carboxyl transferase subunit beta of Bacillus cereus (strain ZK / E33L).